The chain runs to 386 residues: S-adenosylmethionine synthase (386 aa).

Residue His-16 participates in ATP binding. Asp-18 lines the Mg(2+) pocket. A K(+)-binding site is contributed by Glu-44. L-methionine contacts are provided by Glu-57 and Gln-100. Residues 100–110 (QSPDINQGVDR) are flexible loop. Residues 164 to 166 (DGK), 230 to 231 (KF), Asp-239, 245 to 246 (RK), Ala-262, and Lys-266 each bind ATP. L-methionine is bound at residue Asp-239. Lys-270 is a binding site for L-methionine.

It belongs to the AdoMet synthase family. Homotetramer; dimer of dimers. Mg(2+) serves as cofactor. K(+) is required as a cofactor.

The protein resides in the cytoplasm. It carries out the reaction L-methionine + ATP + H2O = S-adenosyl-L-methionine + phosphate + diphosphate. The protein operates within amino-acid biosynthesis; S-adenosyl-L-methionine biosynthesis; S-adenosyl-L-methionine from L-methionine: step 1/1. Catalyzes the formation of S-adenosylmethionine (AdoMet) from methionine and ATP. The overall synthetic reaction is composed of two sequential steps, AdoMet formation and the subsequent tripolyphosphate hydrolysis which occurs prior to release of AdoMet from the enzyme. In Helicobacter hepaticus (strain ATCC 51449 / 3B1), this protein is S-adenosylmethionine synthase.